The chain runs to 534 residues: Chaperonin GroEL (534 aa).

ATP contacts are provided by residues 29 to 32 (TAGP), 86 to 90 (DGTTT), Gly413, and Asp494.

The protein belongs to the chaperonin (HSP60) family. Forms a cylinder of 14 subunits composed of two heptameric rings stacked back-to-back. Interacts with the co-chaperonin GroES.

It is found in the cytoplasm. It catalyses the reaction ATP + H2O + a folded polypeptide = ADP + phosphate + an unfolded polypeptide.. Functionally, together with its co-chaperonin GroES, plays an essential role in assisting protein folding. The GroEL-GroES system forms a nano-cage that allows encapsulation of the non-native substrate proteins and provides a physical environment optimized to promote and accelerate protein folding. The protein is Chaperonin GroEL of Mycoplasmoides gallisepticum (strain R(low / passage 15 / clone 2)) (Mycoplasma gallisepticum).